The following is a 177-amino-acid chain: Apoptosis regulatory protein Siva (177 aa).

At Tyr-34 the chain carries Phosphotyrosine; by ABL2. The segment at 36-55 (REVFERTKQLLFQGAQAYRD) is interaction with BCL2L1 isoform Bcl-x(L) and inhibition of BCL2L1 anti-apoptotic activity.

In terms of assembly, binds through its N-terminal region to the C-terminus of CD27 and to PXMP2/PMP22. Binds to the C-terminus of TNFRSF18/GITR. Binds to BCL2L1/BCLX isoform Bcl-x(L) but not to BAX. Zn(2+) is required as a cofactor. In post-ischemic kidney, found in cells lining the S3 segment of proximal tubules at 12 hours and 1 day post-ischemia. At five and seven days post-ischemia, found in epithelial cells of papillary proliferations in regenerating tubules.

The protein localises to the cytoplasm. The protein resides in the nucleus. Induces CD27-mediated apoptosis. Inhibits BCL2L1 isoform Bcl-x(L) anti-apoptotic activity. Inhibits activation of NF-kappa-B and promotes T-cell receptor-mediated apoptosis. The chain is Apoptosis regulatory protein Siva (Siva1) from Rattus norvegicus (Rat).